The chain runs to 784 residues: DNA repair and recombination protein RAD54-like (784 aa).

Residues 1 to 54 (MRRSLAPSQRGPMRPESRHSFTPPLLKKNKRSCQQELEREQELDRKRQSALRDA) are disordered. A required for chromatin remodeling, strand pairing activities and coupling of ATPase activity region spans residues 2–9 (RRSLAPSQ). A Phosphoserine modification is found at Ser-20. Thr-22 carries the post-translational modification Phosphothreonine. Over residues 36–47 (ELEREQELDRKR) the composition is skewed to basic and acidic residues. One can recognise a Helicase ATP-binding domain in the interval 172 to 346 (EGKRGNFNGC…YSLVNFVNPE (175 aa)). 185-192 (DEMGLGKT) is a binding site for ATP. The DEGH box motif lies at 297–300 (DEGH). Positions 503-660 (LLDFMLAAIR…NNESAEKHFT (158 aa)) constitute a Helicase C-terminal domain. Residues 751-784 (EEAASEQPEEKPDRRKRPSTPPSDDSADEDFLGF) are disordered. Positions 775–784 (DSADEDFLGF) are enriched in acidic residues.

This sequence belongs to the SNF2/RAD54 helicase family. As to quaternary structure, interacts (via N-terminus) with spn-A/Rad51.

It is found in the nucleus. Functionally, involved in mitotic DNA repair and meiotic recombination. Functions in the recombinational DNA repair pathway. Essential for interhomolog gene conversion (GC), but may have a less important role in intersister GC than spn-A/Rad51. In the presence of DNA, spn-A/Rad51 enhances the ATPase activity of okr/Rad54. The sequence is that of DNA repair and recombination protein RAD54-like from Drosophila yakuba (Fruit fly).